A 508-amino-acid polypeptide reads, in one-letter code: Photosystem II CP47 reaction center protein (508 aa).

Helical transmembrane passes span 21-36 (AVHI…WAGS), 101-115 (IVFS…IWHW), 140-156 (GIHL…FGAF), 203-218 (IAAG…FHLS), 237-252 (VLSS…AFVV), and 457-472 (SFAL…HGAR).

Belongs to the PsbB/PsbC family. PsbB subfamily. PSII is composed of 1 copy each of membrane proteins PsbA, PsbB, PsbC, PsbD, PsbE, PsbF, PsbH, PsbI, PsbJ, PsbK, PsbL, PsbM, PsbT, PsbX, PsbY, PsbZ, Psb30/Ycf12, at least 3 peripheral proteins of the oxygen-evolving complex and a large number of cofactors. It forms dimeric complexes. The cofactor is Binds multiple chlorophylls. PSII binds additional chlorophylls, carotenoids and specific lipids..

The protein resides in the plastid. It is found in the chloroplast thylakoid membrane. One of the components of the core complex of photosystem II (PSII). It binds chlorophyll and helps catalyze the primary light-induced photochemical processes of PSII. PSII is a light-driven water:plastoquinone oxidoreductase, using light energy to abstract electrons from H(2)O, generating O(2) and a proton gradient subsequently used for ATP formation. This chain is Photosystem II CP47 reaction center protein, found in Daucus carota (Wild carrot).